A 207-amino-acid polypeptide reads, in one-letter code: Ribosomal RNA small subunit methyltransferase G (207 aa).

S-adenosyl-L-methionine-binding positions include Gly-73, Leu-78, 124-125 (VE), and Arg-139.

This sequence belongs to the methyltransferase superfamily. RNA methyltransferase RsmG family.

Its subcellular location is the cytoplasm. The catalysed reaction is guanosine(527) in 16S rRNA + S-adenosyl-L-methionine = N(7)-methylguanosine(527) in 16S rRNA + S-adenosyl-L-homocysteine. Its function is as follows. Specifically methylates the N7 position of guanine in position 527 of 16S rRNA. In Klebsiella pneumoniae subsp. pneumoniae (strain ATCC 700721 / MGH 78578), this protein is Ribosomal RNA small subunit methyltransferase G.